The chain runs to 470 residues: Asparagine--tRNA ligase (470 aa).

This sequence belongs to the class-II aminoacyl-tRNA synthetase family. In terms of assembly, homodimer.

The protein localises to the cytoplasm. The catalysed reaction is tRNA(Asn) + L-asparagine + ATP = L-asparaginyl-tRNA(Asn) + AMP + diphosphate + H(+). This is Asparagine--tRNA ligase from Blochmanniella floridana.